We begin with the raw amino-acid sequence, 382 residues long: ADP,ATP carrier protein, mitochondrial (382 aa).

Residues 1-71 (MAEQANQPTV…PMMSSSPIFA (71 aa)) constitute a mitochondrion transit peptide. Solcar repeat units lie at residues 80–173 (KNFM…FKRL), 185–277 (KWFG…LKPV), and 285–371 (DNFF…LQIL). 5 helical membrane-spanning segments follow: residues 82-109 (FMID…VKLL), 150-174 (TANV…KRLF), 183-203 (YWKW…SSLF), 253-274 (FNIS…YDSL), and 288-308 (FASF…SYPI). Positions 155 and 167 each coordinate ADP. Position 312 (arginine 312) interacts with ADP. Residues 312–317 (RRRMMM) form an important for transport activity region. Residues 312–317 (RRRMMM) carry the Nucleotide carrier signature motif motif. A helical membrane pass occupies residues 348-368 (AGANILRAIAGAGVLSGYDQL).

Belongs to the mitochondrial carrier (TC 2.A.29) family. In terms of assembly, monomer.

Its subcellular location is the mitochondrion inner membrane. The catalysed reaction is ADP(in) + ATP(out) = ADP(out) + ATP(in). With respect to regulation, the matrix-open state (m-state) is inhibited by the membrane-permeable bongkrekic acid (BKA). The cytoplasmic-open state (c-state) is inhibited by the membrane-impermeable toxic inhibitor carboxyatractyloside (CATR). In terms of biological role, ADP:ATP antiporter that mediates import of ADP into the mitochondrial matrix for ATP synthesis, and export of ATP out to fuel the cell. Cycles between the cytoplasmic-open state (c-state) and the matrix-open state (m-state): operates by the alternating access mechanism with a single substrate-binding site intermittently exposed to either the cytosolic (c-state) or matrix (m-state) side of the inner mitochondrial membrane. The sequence is that of ADP,ATP carrier protein, mitochondrial from Oryza sativa subsp. japonica (Rice).